Reading from the N-terminus, the 226-residue chain is tRNA (guanine-N(7)-)-methyltransferase (226 aa).

Residues 1 to 21 are disordered; that stretch reads MTHPQQPHGPLRSFGRLKSRP. Residues Glu59, Glu84, Asp111, and Asp133 each coordinate S-adenosyl-L-methionine. The active site involves Asp133. Lys137 contacts substrate. Residues 139-144 form an interaction with RNA region; sequence RHNKRR. Substrate is bound by residues Asp169 and 206-209; that span reads TRYE.

It belongs to the class I-like SAM-binding methyltransferase superfamily. TrmB family.

It catalyses the reaction guanosine(46) in tRNA + S-adenosyl-L-methionine = N(7)-methylguanosine(46) in tRNA + S-adenosyl-L-homocysteine. It participates in tRNA modification; N(7)-methylguanine-tRNA biosynthesis. Catalyzes the formation of N(7)-methylguanine at position 46 (m7G46) in tRNA. The protein is tRNA (guanine-N(7)-)-methyltransferase of Caulobacter sp. (strain K31).